We begin with the raw amino-acid sequence, 278 residues long: NAD kinase (278 aa).

Residue aspartate 56 is the Proton acceptor of the active site. Residues 56-57 (DG), 132-133 (NE), arginine 158, aspartate 160, and 171-176 (TAYNKS) each bind NAD(+).

The protein belongs to the NAD kinase family. Requires a divalent metal cation as cofactor.

The protein resides in the cytoplasm. The enzyme catalyses NAD(+) + ATP = ADP + NADP(+) + H(+). Functionally, involved in the regulation of the intracellular balance of NAD and NADP, and is a key enzyme in the biosynthesis of NADP. Catalyzes specifically the phosphorylation on 2'-hydroxyl of the adenosine moiety of NAD to yield NADP. The protein is NAD kinase of Streptococcus agalactiae serotype V (strain ATCC BAA-611 / 2603 V/R).